The sequence spans 246 residues: 1-(5-phosphoribosyl)-5-[(5-phosphoribosylamino)methylideneamino] imidazole-4-carboxamide isomerase (246 aa).

The active-site Proton acceptor is aspartate 10. Aspartate 131 (proton donor) is an active-site residue.

The protein belongs to the HisA/HisF family.

It is found in the cytoplasm. It carries out the reaction 1-(5-phospho-beta-D-ribosyl)-5-[(5-phospho-beta-D-ribosylamino)methylideneamino]imidazole-4-carboxamide = 5-[(5-phospho-1-deoxy-D-ribulos-1-ylimino)methylamino]-1-(5-phospho-beta-D-ribosyl)imidazole-4-carboxamide. Its pathway is amino-acid biosynthesis; L-histidine biosynthesis; L-histidine from 5-phospho-alpha-D-ribose 1-diphosphate: step 4/9. The polypeptide is 1-(5-phosphoribosyl)-5-[(5-phosphoribosylamino)methylideneamino] imidazole-4-carboxamide isomerase (Acidiphilium cryptum (strain JF-5)).